The sequence spans 616 residues: Chaperone protein HscA (616 aa).

This sequence belongs to the heat shock protein 70 family.

Its function is as follows. Chaperone involved in the maturation of iron-sulfur cluster-containing proteins. Has a low intrinsic ATPase activity which is markedly stimulated by HscB. Involved in the maturation of IscU. In Yersinia enterocolitica serotype O:8 / biotype 1B (strain NCTC 13174 / 8081), this protein is Chaperone protein HscA.